The following is a 299-amino-acid chain: uncharacterized protein (299 aa).

Belongs to the glycosyltransferase 2 family.

This is an uncharacterized protein from Mycoplasma pneumoniae (strain ATCC 29342 / M129 / Subtype 1) (Mycoplasmoides pneumoniae).